Reading from the N-terminus, the 511-residue chain is Bifunctional purine biosynthesis protein PurH (511 aa).

An MGS-like domain is found at 1–146 (MGRLALISVT…KNFAHLTVIS (146 aa)).

Belongs to the PurH family.

It carries out the reaction (6R)-10-formyltetrahydrofolate + 5-amino-1-(5-phospho-beta-D-ribosyl)imidazole-4-carboxamide = 5-formamido-1-(5-phospho-D-ribosyl)imidazole-4-carboxamide + (6S)-5,6,7,8-tetrahydrofolate. It catalyses the reaction IMP + H2O = 5-formamido-1-(5-phospho-D-ribosyl)imidazole-4-carboxamide. The protein operates within purine metabolism; IMP biosynthesis via de novo pathway; 5-formamido-1-(5-phospho-D-ribosyl)imidazole-4-carboxamide from 5-amino-1-(5-phospho-D-ribosyl)imidazole-4-carboxamide (10-formyl THF route): step 1/1. It functions in the pathway purine metabolism; IMP biosynthesis via de novo pathway; IMP from 5-formamido-1-(5-phospho-D-ribosyl)imidazole-4-carboxamide: step 1/1. This Microcystis aeruginosa (strain NIES-843 / IAM M-2473) protein is Bifunctional purine biosynthesis protein PurH.